A 118-amino-acid polypeptide reads, in one-letter code: Large ribosomal subunit protein bL19 (118 aa).

It belongs to the bacterial ribosomal protein bL19 family.

In terms of biological role, this protein is located at the 30S-50S ribosomal subunit interface and may play a role in the structure and function of the aminoacyl-tRNA binding site. The polypeptide is Large ribosomal subunit protein bL19 (Helicobacter hepaticus (strain ATCC 51449 / 3B1)).